The following is a 212-amino-acid chain: Probable 2-dehydro-3-deoxy-6-phosphogalactonate aldolase (212 aa).

2-dehydro-3-deoxy-6-phospho-D-galactonate is bound at residue R18. E41 functions as the Proton donor/acceptor in the catalytic mechanism. 2-dehydro-3-deoxy-6-phospho-D-galactonate is bound by residues T70, K130, G160, G180, and S181. The active-site Schiff-base intermediate with substrate is the K130.

The protein belongs to the KHG/KDPG aldolase family. In terms of assembly, homotrimer.

The enzyme catalyses 2-dehydro-3-deoxy-6-phospho-D-galactonate = D-glyceraldehyde 3-phosphate + pyruvate. It functions in the pathway carbohydrate acid metabolism; D-galactonate degradation; D-glyceraldehyde 3-phosphate and pyruvate from D-galactonate: step 3/3. Its function is as follows. Involved in the degradation of galactose via the DeLey-Doudoroff pathway. Catalyzes the reversible, stereospecific retro-aldol cleavage of 2-keto-3-deoxy-6-phosphogalactonate (KDPGal) to pyruvate and D-glyceraldehyde-3-phosphate. The polypeptide is Probable 2-dehydro-3-deoxy-6-phosphogalactonate aldolase (dgoA) (Rhizobium meliloti (strain 1021) (Ensifer meliloti)).